The primary structure comprises 339 residues: Transcription factor IIIA (339 aa).

C2H2-type zinc fingers lie at residues 13–37, 43–67, 73–98, 105–129, 135–159, 162–188, 192–214, 221–246, and 252–276; these read YICS…LCKH, FPCK…SITH, FKCD…NRFH, YVCH…QFTH, YKCP…EKVH, YPCK…KECH, VMCD…KKTH, YCCP…QSFH, and FACE…SVVH. Composition is skewed to basic and acidic residues over residues 275 to 288 and 305 to 316; these read VHDP…EKCP and KSKEKSAAKATE. Positions 275–339 are disordered; sequence VHDPEKRKLK…ETKGSLVIEK (65 aa).

In terms of tissue distribution, synthesized in oocytes and, in much lower levels, in somatic cells.

It localises to the nucleus. Functionally, involved in ribosomal large subunit biogenesis. Interacts with the internal control region (ICR) of approximately 50 bases within the 5S RNA genes, is required for correct transcription of these genes by RNA polymerase III. Also binds the transcribed 5S RNA's. This is Transcription factor IIIA (gtf3a) from Xenopus borealis (Kenyan clawed frog).